Reading from the N-terminus, the 253-residue chain is Major prion protein (253 aa).

The signal sequence occupies residues 1–22 (MANLGCWMLVLFVATWSDLGLC). The interaction with ADGRG6 stretch occupies residues 23–38 (KKRPKPGGWNTGGSRY). The interaction with GRB2, ERI3 and SYN1 stretch occupies residues 23-230 (KKRPKPGGWN…ESQAYYQRGS (208 aa)). Residues 26-108 (PKPGGWNTGG…WNKPSKPKTN (83 aa)) are disordered. A run of 5 repeats spans residues 51–59 (PQGGGGWGQ), 60–67 (PHGGGWGQ), 68–75 (PHGGGWGQ), 76–83 (PHGGGWGQ), and 84–91 (PHGGGWGQ). The interval 51-91 (PQGGGGWGQPHGGGWGQPHGGGWGQPHGGGWGQPHGGGWGQ) is 5 X 8 AA tandem repeats of P-H-G-G-G-W-G-Q. Over residues 52–95 (QGGGGWGQPHGGGWGQPHGGGWGQPHGGGWGQPHGGGWGQGGGT) the composition is skewed to gly residues. Positions 61, 62, 63, 69, 70, 71, 77, 78, 79, 85, 86, and 87 each coordinate Cu(2+). Cys179 and Cys214 are joined by a disulfide. N-linked (GlcNAc...) asparagine glycans are attached at residues Asn181 and Asn197. A lipid anchor (GPI-anchor amidated serine) is attached at Ser230. The propeptide at 231–253 (SMVLFSSPPVILLISFLIFLIVG) is removed in mature form.

The protein belongs to the prion family. As to quaternary structure, monomer and homodimer. Has a tendency to aggregate into amyloid fibrils containing a cross-beta spine, formed by a steric zipper of superposed beta-strands. Soluble oligomers may represent an intermediate stage on the path to fibril formation. Copper binding may promote oligomerization. Interacts with GRB2, APP, ERI3/PRNPIP and SYN1. Mislocalized cytosolically exposed PrP interacts with MGRN1; this interaction alters MGRN1 subcellular location and causes lysosomal enlargement. Interacts with KIAA1191. Interacts with ADGRG6. In terms of processing, the glycosylation pattern (the amount of mono-, di- and non-glycosylated forms or glycoforms) seems to differ in normal and CJD prion.

The protein resides in the cell membrane. The protein localises to the golgi apparatus. Functionally, its primary physiological function is unclear. May play a role in neuronal development and synaptic plasticity. May be required for neuronal myelin sheath maintenance. May promote myelin homeostasis through acting as an agonist for ADGRG6 receptor. May play a role in iron uptake and iron homeostasis. Soluble oligomers are toxic to cultured neuroblastoma cells and induce apoptosis (in vitro). Association with GPC1 (via its heparan sulfate chains) targets PRNP to lipid rafts. Also provides Cu(2+) or Zn(2+) for the ascorbate-mediated GPC1 deaminase degradation of its heparan sulfate side chains. This is Major prion protein (PRNP) from Homo sapiens (Human).